A 174-amino-acid chain; its full sequence is Probable carboxylesterase Culp5 (174 aa).

Serine 67 (nucleophile) is an active-site residue. A disulfide bridge connects residues cysteine 137 and cysteine 144. Residue aspartate 141 is part of the active site. Catalysis depends on histidine 153, which acts as the Proton donor/acceptor.

It belongs to the cutinase family.

Its function is as follows. Does not exhibit cutinase activity. The chain is Probable carboxylesterase Culp5 from Mycobacterium tuberculosis (strain ATCC 25618 / H37Rv).